The chain runs to 198 residues: Cerebellin-4 (198 aa).

The signal sequence occupies residues 1–24 (MGSARRALSVVPAVLLILVLPVWA). N-linked (GlcNAc...) asparagine glycosylation is found at N26 and N85. The C1q domain maps to 63–198 (AANSKVAFSA…TFSGFLVFPL (136 aa)).

As to quaternary structure, homohexamer; disulfide-linked homotrimers. The trimers are assembled via the globular C1q domains. The trimers associate via N-terminal cysteine residues to form disulfide-linked hexamers. May form oligomers with CBLN1, CBLN2 and CBLN3 prior to secretion. Once secreted, does not interact with other CBLN family members. Strongly interacts with DCC in a NTN1-displaceable fashion. Weakly binds to NRXN1 and NRXN2 long and short isoforms produced by alternative promoter usage. Interaction with NRXN3 short isoform is hardly detectable; no interaction at all with NRXN3 long isoform. Does not interact with NEO1, GRID1 and GRID2. Post-translationally, sialoglycoprotein. In terms of tissue distribution, expressed in brain with high levels in particular thalamic nuclei. In the thalamus, predominantly expressed in neurons within the parafascicular nucleus. Found in the hippocampus, mostly in the dendrites and somata of pyramidal neurons (at protein level). Very low or no expression in most other brain regions. Highly expressed in the ventral medial habenula.

The protein resides in the secreted. The protein localises to the synapse. In terms of biological role, acts as a synaptic organizer in specific subsets of neurons in the brain. Essential for the formation and maintenance of inhibitory GABAergic synapses. Promotes the development of dendrite-targeting inhibitory GABAergic synapses made by somatostatin-positive interneurons. May contribute to the function of ventral medial habenula region of the brain implicated in the regulation of anxiety-related behaviors. May play a role in CBLN3 export from the endoplasmic reticulum and secretion. The sequence is that of Cerebellin-4 (Cbln4) from Mus musculus (Mouse).